The primary structure comprises 471 residues: UDP-N-acetylmuramate--L-alanine ligase (471 aa).

Position 114–120 (114–120) interacts with ATP; it reads GTHGKTT.

This sequence belongs to the MurCDEF family.

Its subcellular location is the cytoplasm. It catalyses the reaction UDP-N-acetyl-alpha-D-muramate + L-alanine + ATP = UDP-N-acetyl-alpha-D-muramoyl-L-alanine + ADP + phosphate + H(+). The protein operates within cell wall biogenesis; peptidoglycan biosynthesis. In terms of biological role, cell wall formation. This Rhizobium etli (strain ATCC 51251 / DSM 11541 / JCM 21823 / NBRC 15573 / CFN 42) protein is UDP-N-acetylmuramate--L-alanine ligase.